Reading from the N-terminus, the 416-residue chain is Gamma-glutamyl phosphate reductase (416 aa).

The protein belongs to the gamma-glutamyl phosphate reductase family.

It is found in the cytoplasm. The catalysed reaction is L-glutamate 5-semialdehyde + phosphate + NADP(+) = L-glutamyl 5-phosphate + NADPH + H(+). It participates in amino-acid biosynthesis; L-proline biosynthesis; L-glutamate 5-semialdehyde from L-glutamate: step 2/2. Functionally, catalyzes the NADPH-dependent reduction of L-glutamate 5-phosphate into L-glutamate 5-semialdehyde and phosphate. The product spontaneously undergoes cyclization to form 1-pyrroline-5-carboxylate. The polypeptide is Gamma-glutamyl phosphate reductase (Streptococcus mutans serotype c (strain ATCC 700610 / UA159)).